Consider the following 371-residue polypeptide: Neuropeptide S receptor (371 aa).

Topologically, residues 1-52 (MPANFTEGSFDSNGTGQMLDSSPVACTETVTFTEVVEGKEWGSFYYSFKTEQ) are extracellular. N-linked (GlcNAc...) asparagine glycosylation is found at asparagine 4 and asparagine 13. A helical transmembrane segment spans residues 53–73 (LITLWVLFVFTIVGNSVVLFS). Residues 74-82 (TWRRKRKSR) are Cytoplasmic-facing. Residues 83 to 103 (MTFFVTQLAITDSFTGLVNIL) form a helical membrane-spanning segment. The Extracellular portion of the chain corresponds to 104 to 123 (TDIIWRFTGDFMAPDLVCRV). Cysteines 121 and 197 form a disulfide. A helical transmembrane segment spans residues 124 to 144 (VRYLQVVLLYASTYVLVSLSI). Residues 145 to 164 (DRYHAIVYPMKFLQGEKQAK) lie on the Cytoplasmic side of the membrane. A helical membrane pass occupies residues 165-185 (VLIVIAWSLSFLFSIPTLIIF). The Extracellular portion of the chain corresponds to 186 to 212 (GKRTLSNGEVQCWALWPDDSYWTPYMT). The chain crosses the membrane as a helical span at residues 213–233 (IVAFLVYFIPLTIISVMYGIV). Over 234–275 (IRTIWIKSKTYETVISNCSDGKLCSSYNRGLISKAKIKAIKY) the chain is Cytoplasmic. Residues 276–296 (SIVIILAFICCWSPYFLFDIL) form a helical membrane-spanning segment. Over 297–312 (DNFNLLPDTQERFYAS) the chain is Extracellular. A helical membrane pass occupies residues 313–333 (VIIQNLPALNSAINPLIYCVF). Over 334–371 (SSSISFPCGERRSQDSIMTFRERTERHEMQILSKPEFI) the chain is Cytoplasmic.

It belongs to the G-protein coupled receptor 1 family. Vasopressin/oxytocin receptor subfamily.

It localises to the cell membrane. Functionally, G-protein coupled receptor for neuropeptide S (NPS). Promotes mobilization of intracellular Ca(2+) stores. Inhibits cell growth in response to NPS binding. Involved in pathogenesis of asthma and other IgE-mediated diseases. In Macaca mulatta (Rhesus macaque), this protein is Neuropeptide S receptor (NPSR1).